We begin with the raw amino-acid sequence, 88 residues long: Small ribosomal subunit protein bS20 (88 aa).

The segment at Met-1–Ser-23 is disordered.

Belongs to the bacterial ribosomal protein bS20 family.

Its function is as follows. Binds directly to 16S ribosomal RNA. The sequence is that of Small ribosomal subunit protein bS20 from Teredinibacter turnerae (strain ATCC 39867 / T7901).